An 865-amino-acid polypeptide reads, in one-letter code: Valine--tRNA ligase (865 aa).

A 'HIGH' region motif is present at residues 43 to 53 (PNITGRIHMGH). Residues 523–527 (KMSKS) carry the 'KMSKS' region motif. Lysine 526 contributes to the ATP binding site. Residues 797–865 (GLIDFEKEKE…RLESILRDLE (69 aa)) adopt a coiled-coil conformation.

Belongs to the class-I aminoacyl-tRNA synthetase family. ValS type 1 subfamily. As to quaternary structure, monomer.

The protein resides in the cytoplasm. The catalysed reaction is tRNA(Val) + L-valine + ATP = L-valyl-tRNA(Val) + AMP + diphosphate. Functionally, catalyzes the attachment of valine to tRNA(Val). As ValRS can inadvertently accommodate and process structurally similar amino acids such as threonine, to avoid such errors, it has a 'posttransfer' editing activity that hydrolyzes mischarged Thr-tRNA(Val) in a tRNA-dependent manner. The chain is Valine--tRNA ligase from Thermotoga maritima (strain ATCC 43589 / DSM 3109 / JCM 10099 / NBRC 100826 / MSB8).